We begin with the raw amino-acid sequence, 998 residues long: AKSGRASCKKCGDNIAKESLGLAIMVQSPMFDGKVPHWHHYSCFWKRARVLSQGDIYGYTELRWEDQEMIKKAIETGGAAAGAGGDSKGGKGEMTLNDFAAEYAKSNRSACKGCEQKIEKGQIRISKKSVDVERPQLGMIDRWYHPDCFVSSREELDFLPSYSASQLKGFTILSAEDKDSLKKKLPAVKNEGKRKADEVDGHSAATKKKIKKEKEKESKLEKLLKEQTELIWHIKDELKKVCSTNDLKELLIANKQQVPSGETNIVDRVSDGMAFGALLPCEECSGQFVFKGDAYYCTGDLSAWTKCVAKTQTPNRKDWVTPKEFHEIPYLKKFKFKRHDRAFPPCAAPTPISPPAAPEPKPTVEETFPEGKPLTNTKVLLIGKLSKNKDEVKTLIEGLGGKVAGSAHKANLCISTNKEVKKMSKKMEEVKAANVRVVSDDFLKEVESGKSVQELLSQFGISSWGAEIKQEAVQPTEKQPSSGPVAGKSSGKVKEEKGSNKSEKKMKLTVKGGAAIDPDSELEDSCHVLETGGKIFSATLGLVDITRGTNSYYKLQLIEHDRDSRYWVFRSWGRVGTVIGSKKLEEMSSKEDAIEHFLNLYQDKTGNAWHSPNFTKYPKKFYPLEIDYGQEEDVVKKLSVGAGTKSKLAKPVQELIKLIFDVESMKKAMVEFEIDLQKMPLGKLSKRQIQSAYSILSQVQQAVSESLSEARLLDLSNQFYTLIPHDFGMKKPPLLNNLEYIQAKVQMLDNLLDIEVAYSLLRGGADDGEKDPIDVKYEKIKTDIKVVAKDSEESRIICDYVKNTHADTHNAYDLEVLEIFKIDREGEYQRYKPFKQLHNRQLLWHGSRTTNFAGILSQGLRIAPPEAPVTGYMFGKGIYFADMVSKSANYCHAMPGSPIGLILLGEVALGNMHELKAASQITKLPKGKHSVKGLGRTAPDPSATVQLDGVDVPLGKGTSANISDTSLLYNEYIVYDIAQVNLKYLLKLKFNYKGGMMW.

2 consecutive PARP-type zinc fingers follow at residues 1-78 (AKSG…ETGG) and 99-189 (FAAE…PAVK). Cys-8, Cys-11, His-40, Cys-43, Cys-111, Cys-114, His-145, and Cys-148 together coordinate Zn(2+). Residues 185–211 (LPAVKNEGKRKADEVDGHSAATKKKIK) are disordered. Residues 190–201 (NEGKRKADEVDG) are compositionally biased toward basic and acidic residues. Short sequence motifs (nuclear localization signal) lie at residues 193–195 (KRK) and 207–212 (KKKIKK). The PADR1 zinc-binding domain maps to 211–345 (KKEKEKESKL…FKRHDRAFPP (135 aa)). A zinc ribbon region spans residues 276 to 318 (GALLPCEECSGQFVFKGDAYYCTGDLSAWTKCVAKTQTPNRKD). 4 residues coordinate Zn(2+): Cys-281, Cys-284, Cys-297, and Cys-307. The span at 348–361 (APTPISPPAAPEPK) shows a compositional bias: pro residues. Residues 348–370 (APTPISPPAAPEPKPTVEETFPE) form a disordered region. An automodification domain region spans residues 357-507 (APEPKPTVEE…GSNKSEKKMK (151 aa)). The 92-residue stretch at 369–460 (PEGKPLTNTK…SVQELLSQFG (92 aa)) folds into the BRCT domain. 14 positions are modified to polyADP-ribosyl glutamic acid: Glu-391, Glu-397, Glu-419, Glu-428, Glu-429, Glu-445, Glu-447, Glu-454, Glu-467, Glu-471, Glu-477, Glu-495, Glu-496, and Glu-503. The segment at 471–510 (EAVQPTEKQPSSGPVAGKSSGKVKEEKGSNKSEKKMKLTV) is disordered. Residues 492 to 506 (KVKEEKGSNKSEKKM) are compositionally biased toward basic and acidic residues. One can recognise a WGR domain in the interval 525 to 621 (SCHVLETGGK…PNFTKYPKKF (97 aa)). In terms of domain architecture, PARP alpha-helical spans 645 to 762 (KSKLAKPVQE…DIEVAYSLLR (118 aa)). The 227-residue stretch at 771 to 997 (DPIDVKYEKI…LKFNYKGGMM (227 aa)) folds into the PARP catalytic domain. NAD(+)-binding positions include 845–847 (HGS), Gly-854, Arg-861, and Ser-887. Catalysis depends on Glu-971, which acts as the For poly [ADP-ribose] polymerase activity.

It belongs to the ARTD/PARP family. In terms of assembly, homodimer; PARP-type zinc-fingers from separate parp1 molecules form a dimer module that specifically recognizes DNA strand breaks. Poly-ADP-ribosylated on serine, glutamate and aspartate residues by autocatalysis. Auto-ADP-ribosylation on serine takes place following interaction with HPF1. Auto poly-ADP-ribosylation on serine residues promotes its dissociation from chromatin.

It localises to the chromosome. The protein localises to the nucleus. Its subcellular location is the nucleolus. It is found in the cytoplasm. The protein resides in the cytosol. The catalysed reaction is NAD(+) + (ADP-D-ribosyl)n-acceptor = nicotinamide + (ADP-D-ribosyl)n+1-acceptor + H(+).. It catalyses the reaction L-seryl-[protein] + NAD(+) = O-(ADP-D-ribosyl)-L-seryl-[protein] + nicotinamide + H(+). It carries out the reaction L-aspartyl-[protein] + NAD(+) = 4-O-(ADP-D-ribosyl)-L-aspartyl-[protein] + nicotinamide. The enzyme catalyses L-glutamyl-[protein] + NAD(+) = 5-O-(ADP-D-ribosyl)-L-glutamyl-[protein] + nicotinamide. The catalysed reaction is L-tyrosyl-[protein] + NAD(+) = O-(ADP-D-ribosyl)-L-tyrosyl-[protein] + nicotinamide + H(+). It catalyses the reaction L-histidyl-[protein] + NAD(+) = N(tele)-(ADP-D-ribosyl)-L-histidyl-[protein] + nicotinamide + H(+). With respect to regulation, ADP-ribosyltransferase activity is regulated via an allosteric activation mechanism. In absence of activation signal, parp1 is autoinhibited by the PARP alpha-helical domain (also named HD region), which prevents effective NAD(+)-binding. Activity is highly stimulated by signals, such as DNA strand breaks. Binding to damaged DNA unfolds the PARP alpha-helical domain, relieving autoinhibition. Poly-ADP-ribosyltransferase activity is tightly regulated and parp1 is removed from damaged chromatin following initial poly-ADP-ribosylation of chromatin to avoid prolonged residence (trapping) that has cytotoxic consequences. A number of factors or post-translational modifications (auto-poly-ADP-ribosylation) promote parp1 removal from chromatin. Functionally, poly-ADP-ribosyltransferase that mediates poly-ADP-ribosylation of proteins and plays a key role in DNA repair. Mediates glutamate, aspartate, serine, histidine or tyrosine ADP-ribosylation of proteins: the ADP-D-ribosyl group of NAD(+) is transferred to the acceptor carboxyl group of target residues and further ADP-ribosyl groups are transferred to the 2'-position of the terminal adenosine moiety, building up a polymer with an average chain length of 20-30 units. Serine ADP-ribosylation of proteins constitutes the primary form of ADP-ribosylation of proteins in response to DNA damage. Specificity for the different amino acids is conferred by interacting factors, such as hpf1 and nmnat1. Following interaction with hpf1, catalyzes serine ADP-ribosylation of target proteins; hpf1 confers serine specificity by completing the parp1 active site. Also catalyzes tyrosine ADP-ribosylation of target proteins following interaction with hpf1. Following interaction with nmnat1, catalyzes glutamate and aspartate ADP-ribosylation of target proteins; nmnat1 confers glutamate and aspartate specificity. Parp1 initiates the repair of DNA breaks: recognizes and binds DNA breaks within chromatin and recruits hpf1, licensing serine ADP-ribosylation of target proteins, such as histones (H2BS6ADPr and H3S10ADPr), thereby promoting decompaction of chromatin and the recruitment of repair factors leading to the reparation of DNA strand breaks. In addition to base excision repair (BER) pathway, also involved in double-strand breaks (DSBs) repair. Mediates the poly-ADP-ribosylation of a number of proteins. In addition to proteins, also able to ADP-ribosylate DNA: catalyzes ADP-ribosylation of DNA strand break termini containing terminal phosphates and a 2'-OH group in single- and double-stranded DNA, respectively. Parp1-mediated DNA repair in neurons plays a role in sleep: senses DNA damage in neurons and promotes sleep, facilitating efficient DNA repair. In addition to DNA repair, also involved in other processes, such as transcription regulation, programmed cell death, membrane repair, adipogenesis and innate immunity. Acts as a repressor of transcription: binds to nucleosomes and modulates chromatin structure in a manner similar to histone H1, thereby altering RNA polymerase II. Acts both as a positive and negative regulator of transcription elongation, depending on the context. Poly-ADP-ribose chains generated by parp1 also play a role in poly-ADP-ribose-dependent cell death, a process named parthanatos. Also acts as a negative regulator of the cGAS-STING pathway by mediating poly-ADP-ribosylation and inactivation of cgas. Acts as a negative regulator of adipogenesis by catalyzing poly ADP-ribosylation of histone H2B on 'Glu-35' (H2BE35ADPr). This chain is Poly [ADP-ribose] polymerase 1 (parp1), found in Xenopus laevis (African clawed frog).